We begin with the raw amino-acid sequence, 298 residues long: Rhodomycin D methylesterase DnrP (298 aa).

Residues 25 to 277 form the AB hydrolase-1 domain; sequence PLLLIAGGNL…VEIENMGHAL (253 aa).

Belongs to the methyl esterase DnrP family.

The catalysed reaction is rhodomycin D + H2O = 10-carboxy-13-deoxycarminomycin + methanol + H(+). It carries out the reaction 4-O-methylrhodomycin D + H2O = 10-carboxy-13-deoxydaunorubicin + methanol + H(+). It participates in antibiotic biosynthesis; daunorubicin biosynthesis. Its pathway is antibiotic biosynthesis; carminomycin biosynthesis. Its function is as follows. Involved in the biosynthesis of the anthracyclines carminomycin and daunorubicin (daunomycin) which are aromatic polyketide antibiotics that exhibit high cytotoxicity and are widely applied in the chemotherapy of a variety of cancers. Catalyzes the removal of methyl group from the carbomethoxy group of rhodomycin D (10-carbomethoxy-13-deoxycarminomycin) and 4-O-methylrhodomycin D to yield 10-carboxy-13-deoxycarminomycin and 10-carboxy-13-deoxydaunorubicin, respectively. Could be also involved in the decarboxylation of 10-carboxy-13-deoxycarminomycin and 10-carboxy-13-deoxydaunorubicin to yield 13-deoxycarminomycin and 13-deoxydaunorubicin, respectively. It seems that DnrK may influence the ability of DnrP to carry out the decarboxylation. The sequence is that of Rhodomycin D methylesterase DnrP (dnrP) from Streptomyces peucetius.